The primary structure comprises 37 residues: Large ribosomal subunit protein bL36 (37 aa).

Belongs to the bacterial ribosomal protein bL36 family.

The chain is Large ribosomal subunit protein bL36 from Nitratiruptor sp. (strain SB155-2).